Consider the following 157-residue polypeptide: Ribosome maturation factor RimP (157 aa).

The protein belongs to the RimP family.

It localises to the cytoplasm. Functionally, required for maturation of 30S ribosomal subunits. In Thermus thermophilus (strain ATCC BAA-163 / DSM 7039 / HB27), this protein is Ribosome maturation factor RimP.